A 106-amino-acid chain; its full sequence is Ig kappa chain C region, A allele (106 aa).

In terms of domain architecture, Ig-like spans 5–102 (PTVSIFPPSM…SSSPVVKSFN (98 aa)). A disulfide bridge connects residues Cys26 and Cys86.

The chain is Ig kappa chain C region, A allele from Rattus norvegicus (Rat).